Consider the following 330-residue polypeptide: Aspartate--ammonia ligase (330 aa).

It belongs to the class-II aminoacyl-tRNA synthetase family. AsnA subfamily.

It is found in the cytoplasm. It carries out the reaction L-aspartate + NH4(+) + ATP = L-asparagine + AMP + diphosphate + H(+). It participates in amino-acid biosynthesis; L-asparagine biosynthesis; L-asparagine from L-aspartate (ammonia route): step 1/1. In Glaesserella parasuis serovar 5 (strain SH0165) (Haemophilus parasuis), this protein is Aspartate--ammonia ligase.